The chain runs to 285 residues: Bifunctional protein FolD (285 aa).

NADP(+)-binding positions include Gly-166 to Ser-168 and Ile-232.

Belongs to the tetrahydrofolate dehydrogenase/cyclohydrolase family. Homodimer.

It carries out the reaction (6R)-5,10-methylene-5,6,7,8-tetrahydrofolate + NADP(+) = (6R)-5,10-methenyltetrahydrofolate + NADPH. The enzyme catalyses (6R)-5,10-methenyltetrahydrofolate + H2O = (6R)-10-formyltetrahydrofolate + H(+). It participates in one-carbon metabolism; tetrahydrofolate interconversion. In terms of biological role, catalyzes the oxidation of 5,10-methylenetetrahydrofolate to 5,10-methenyltetrahydrofolate and then the hydrolysis of 5,10-methenyltetrahydrofolate to 10-formyltetrahydrofolate. The protein is Bifunctional protein FolD of Buchnera aphidicola subsp. Schizaphis graminum (strain Sg).